The following is a 300-amino-acid chain: Quinolinate synthase (300 aa).

Iminosuccinate contacts are provided by His23 and Ser40. Residue Cys85 coordinates [4Fe-4S] cluster. Residues 111 to 113 and Ser128 contribute to the iminosuccinate site; that span reads YIN. Cys171 contributes to the [4Fe-4S] cluster binding site. Iminosuccinate contacts are provided by residues 198-200 and Thr215; that span reads HPE. Position 258 (Cys258) interacts with [4Fe-4S] cluster.

Belongs to the quinolinate synthase family. Type 2 subfamily. The cofactor is [4Fe-4S] cluster.

Its subcellular location is the cytoplasm. The catalysed reaction is iminosuccinate + dihydroxyacetone phosphate = quinolinate + phosphate + 2 H2O + H(+). Its pathway is cofactor biosynthesis; NAD(+) biosynthesis; quinolinate from iminoaspartate: step 1/1. Functionally, catalyzes the condensation of iminoaspartate with dihydroxyacetone phosphate to form quinolinate. In Clostridium novyi (strain NT), this protein is Quinolinate synthase.